We begin with the raw amino-acid sequence, 220 residues long: Cytidylate kinase (220 aa).

10–18 (GPAGAGKST) is an ATP binding site.

Belongs to the cytidylate kinase family. Type 1 subfamily.

Its subcellular location is the cytoplasm. The enzyme catalyses CMP + ATP = CDP + ADP. It catalyses the reaction dCMP + ATP = dCDP + ADP. This chain is Cytidylate kinase, found in Alkaliphilus metalliredigens (strain QYMF).